Reading from the N-terminus, the 340-residue chain is Protein phosphatase PTC7 homolog fig (340 aa).

The PPM-type phosphatase domain maps to 58 to 314 (RAQAETIQAP…DDITVVLASV (257 aa)). Positions 90, 91, and 236 each coordinate Mn(2+).

This sequence belongs to the PP2C family. Requires Mg(2+) as cofactor. Mn(2+) is required as a cofactor.

The catalysed reaction is O-phospho-L-seryl-[protein] + H2O = L-seryl-[protein] + phosphate. The enzyme catalyses O-phospho-L-threonyl-[protein] + H2O = L-threonyl-[protein] + phosphate. The chain is Protein phosphatase PTC7 homolog fig from Drosophila pseudoobscura pseudoobscura (Fruit fly).